Here is a 318-residue protein sequence, read N- to C-terminus: Acetyl-coenzyme A carboxylase carboxyl transferase subunit alpha (318 aa).

The CoA carboxyltransferase C-terminal domain maps to 31 to 292 (DLTNEIEKLE…NKTITKSLHA (262 aa)).

Belongs to the AccA family. In terms of assembly, acetyl-CoA carboxylase is a heterohexamer composed of biotin carboxyl carrier protein (AccB), biotin carboxylase (AccC) and two subunits each of ACCase subunit alpha (AccA) and ACCase subunit beta (AccD).

The protein localises to the cytoplasm. It catalyses the reaction N(6)-carboxybiotinyl-L-lysyl-[protein] + acetyl-CoA = N(6)-biotinyl-L-lysyl-[protein] + malonyl-CoA. Its pathway is lipid metabolism; malonyl-CoA biosynthesis; malonyl-CoA from acetyl-CoA: step 1/1. In terms of biological role, component of the acetyl coenzyme A carboxylase (ACC) complex. First, biotin carboxylase catalyzes the carboxylation of biotin on its carrier protein (BCCP) and then the CO(2) group is transferred by the carboxyltransferase to acetyl-CoA to form malonyl-CoA. The polypeptide is Acetyl-coenzyme A carboxylase carboxyl transferase subunit alpha (Listeria monocytogenes serotype 4a (strain HCC23)).